A 465-amino-acid chain; its full sequence is Glycine--tRNA ligase (465 aa).

The substrate site is built by R98 and E174. ATP-binding positions include 206-208 (RNE), 216-221 (FRTREF), 290-291 (EL), and 334-337 (GADR). A substrate-binding site is contributed by 221-225 (FEQME). 330–334 (EPSLG) serves as a coordination point for substrate.

It belongs to the class-II aminoacyl-tRNA synthetase family. Homodimer.

It localises to the cytoplasm. The enzyme catalyses tRNA(Gly) + glycine + ATP = glycyl-tRNA(Gly) + AMP + diphosphate. In terms of biological role, catalyzes the attachment of glycine to tRNA(Gly). The chain is Glycine--tRNA ligase from Agathobacter rectalis (strain ATCC 33656 / DSM 3377 / JCM 17463 / KCTC 5835 / VPI 0990) (Eubacterium rectale).